The chain runs to 280 residues: Pantothenate synthetase (280 aa).

ATP is bound at residue 30 to 37 (MGALHEGH). His37 (proton donor) is an active-site residue. Residue Gln61 coordinates (R)-pantoate. Gln61 is a beta-alanine binding site. Residue 147–150 (GQKD) participates in ATP binding. Gln153 lines the (R)-pantoate pocket. ATP-binding positions include Val176 and 184 to 187 (MSSR).

Belongs to the pantothenate synthetase family. As to quaternary structure, homodimer.

It localises to the cytoplasm. The catalysed reaction is (R)-pantoate + beta-alanine + ATP = (R)-pantothenate + AMP + diphosphate + H(+). The protein operates within cofactor biosynthesis; (R)-pantothenate biosynthesis; (R)-pantothenate from (R)-pantoate and beta-alanine: step 1/1. In terms of biological role, catalyzes the condensation of pantoate with beta-alanine in an ATP-dependent reaction via a pantoyl-adenylate intermediate. The protein is Pantothenate synthetase of Thermodesulfovibrio yellowstonii (strain ATCC 51303 / DSM 11347 / YP87).